A 313-amino-acid chain; its full sequence is MIGRHKHCIALEDFSREEILEVIDLAVSMKEVLQRPIKKVPSLRGKMVVNLFFEASTRTRSSFETAAKILSADALNWTSSSSSVTKGETLVDTAKNLEAMRPDVLVIRHSAGGAPRLVAEHVGCSVVSAGDGAHEHPSQGLLDCFTLREKLGTLEGKTVAIVGDVSHSRVARSDLHAFPKLGAKVRLCGPPTMMPAGVERLGATVHTDLREAVDGADAVIMLRIQHERIGDPLIPGTREYSKVWGLNAKKAADWLKPSCVILHPGPINRGVELSPEVADGPRSVILDQVQNGVAVRMAILYLLAGGAGEEARA.

2 residues coordinate carbamoyl phosphate: R58 and T59. K86 is an L-aspartate binding site. Carbamoyl phosphate is bound by residues R108, H136, and Q139. 2 residues coordinate L-aspartate: R169 and R223. 2 residues coordinate carbamoyl phosphate: G265 and P266.

It belongs to the aspartate/ornithine carbamoyltransferase superfamily. ATCase family. In terms of assembly, heterododecamer (2C3:3R2) of six catalytic PyrB chains organized as two trimers (C3), and six regulatory PyrI chains organized as three dimers (R2).

It carries out the reaction carbamoyl phosphate + L-aspartate = N-carbamoyl-L-aspartate + phosphate + H(+). It participates in pyrimidine metabolism; UMP biosynthesis via de novo pathway; (S)-dihydroorotate from bicarbonate: step 2/3. Functionally, catalyzes the condensation of carbamoyl phosphate and aspartate to form carbamoyl aspartate and inorganic phosphate, the committed step in the de novo pyrimidine nucleotide biosynthesis pathway. In Anaeromyxobacter dehalogenans (strain 2CP-C), this protein is Aspartate carbamoyltransferase catalytic subunit.